The following is a 227-amino-acid chain: Holin (227 aa).

The Cytoplasmic segment spans residues 1–33 (MVLVRGGYKLEKFLQLLTVLLQEAKDPASLLKR). A helical; Signal-anchor for type II membrane protein transmembrane segment spans residues 34-48 (LLTILVAVIIFLFVS). The Periplasmic segment spans residues 49–227 (NTSEVMSFLK…PQQRSLGRSI (179 aa)). A disulfide bond links Cys-178 and Cys-216.

Belongs to the T4likevirus holin family. As to quaternary structure, homomultimer. Heterotetramer composed of 2 holin and 2 antiholin. The holin-antiholin complex binds dsDNA. Interacts (via C-terminus) with antiholin (via C-terminus); this interaction blocks the holin homomultimerization and delays host cell lysis. Interacts (via N-terminus) with the lysis inhibition accessory protein rIII; this interaction stabilizes the holin-antiholin complex thereby resulting in a robust block of the hole formation. Disulfide bond is required for functionality.

It is found in the host cell inner membrane. Accumulates harmlessly in the cytoplasmic membrane until it reaches a critical concentration that triggers the formation of micron-scale pores (holes) causing host cell membrane disruption and endolysin escape into the periplasmic space. Determines the precise timing of host cell lysis. Regulated by specific antiholins that somehow sense superinfections and then delay lysis. Participates with the endolysin and spanin proteins in the sequential events which lead to the programmed host cell lysis releasing the mature viral particles from the host cell. This chain is Holin, found in Escherichia phage T5 (Enterobacteria phage T5).